A 348-amino-acid polypeptide reads, in one-letter code: Phosphate acyltransferase (348 aa).

It belongs to the PlsX family. As to quaternary structure, homodimer. Probably interacts with PlsY.

It localises to the cytoplasm. The enzyme catalyses a fatty acyl-[ACP] + phosphate = an acyl phosphate + holo-[ACP]. It functions in the pathway lipid metabolism; phospholipid metabolism. Functionally, catalyzes the reversible formation of acyl-phosphate (acyl-PO(4)) from acyl-[acyl-carrier-protein] (acyl-ACP). This enzyme utilizes acyl-ACP as fatty acyl donor, but not acyl-CoA. This is Phosphate acyltransferase from Francisella tularensis subsp. tularensis (strain FSC 198).